The sequence spans 468 residues: Putrescine aminotransferase (468 aa).

Pyridoxal 5'-phosphate contacts are provided by residues 150-151 and glutamine 274; that span reads GT. Lysine 300 is modified (N6-(pyridoxal phosphate)lysine). Threonine 332 contacts pyridoxal 5'-phosphate.

It belongs to the class-III pyridoxal-phosphate-dependent aminotransferase family. Putrescine aminotransferase subfamily. Pyridoxal 5'-phosphate serves as cofactor.

The enzyme catalyses an alkane-alpha,omega-diamine + 2-oxoglutarate = an omega-aminoaldehyde + L-glutamate. It catalyses the reaction putrescine + 2-oxoglutarate = 1-pyrroline + L-glutamate + H2O. It carries out the reaction cadaverine + 2-oxoglutarate = 5-aminopentanal + L-glutamate. It functions in the pathway amine and polyamine degradation; putrescine degradation; 4-aminobutanal from putrescine (transaminase route): step 1/1. Its function is as follows. Catalyzes the aminotransferase reaction from putrescine to 2-oxoglutarate, leading to glutamate and 4-aminobutanal, which spontaneously cyclizes to form 1-pyrroline. This is the first step in one of two pathways for putrescine degradation, where putrescine is converted into 4-aminobutanoate (gamma-aminobutyrate or GABA) via 4-aminobutanal. Also functions as a cadaverine transaminase in a a L-lysine degradation pathway to succinate that proceeds via cadaverine, glutarate and L-2-hydroxyglutarate. The protein is Putrescine aminotransferase of Pectobacterium atrosepticum (strain SCRI 1043 / ATCC BAA-672) (Erwinia carotovora subsp. atroseptica).